We begin with the raw amino-acid sequence, 181 residues long: UPF0232 protein SAV_4320 (181 aa).

Over residues 1-10 (MSDTPAQTPE) the composition is skewed to polar residues. Disordered stretches follow at residues 1–64 (MSDT…GRDP) and 156–181 (QGPGGPARRYGPLRAPGSTGPGDTYG). Over residues 30 to 39 (AAKEQARARG) the composition is skewed to basic and acidic residues.

This sequence belongs to the UPF0232 family.

This chain is UPF0232 protein SAV_4320, found in Streptomyces avermitilis (strain ATCC 31267 / DSM 46492 / JCM 5070 / NBRC 14893 / NCIMB 12804 / NRRL 8165 / MA-4680).